Consider the following 670-residue polypeptide: Probable potassium transport system protein Kup (670 aa).

Residues 1-42 form a disordered region; that stretch reads MSQIPSPNDPPPAGAVPTSGAPAGPSATPAPSPTAGFSLPEH. Residues 15 to 35 are compositionally biased toward low complexity; sequence AVPTSGAPAGPSATPAPSPTA. 12 consecutive transmembrane segments (helical) span residues 51-71, 91-111, 144-164, 180-200, 208-228, 254-274, 290-310, 322-342, 380-400, 406-426, 440-460, and 464-484; these read LAAL…TSPL, VLGV…FKYM, VLLM…IITP, PAME…LFLF, VGAV…VLGV, GWHG…GEAL, WLGL…ALLL, LLAP…AAIV, IYLP…VLGF, LASA…LLFH, AWPL…ANVV, and DGGW…STWK.

Belongs to the HAK/KUP transporter (TC 2.A.72) family.

It is found in the cell inner membrane. The catalysed reaction is K(+)(in) + H(+)(in) = K(+)(out) + H(+)(out). Functionally, transport of potassium into the cell. Likely operates as a K(+):H(+) symporter. In Anaeromyxobacter dehalogenans (strain 2CP-C), this protein is Probable potassium transport system protein Kup.